Consider the following 122-residue polypeptide: Secreted RxLR effector protein RXLR-C251 (122 aa).

The signal sequence occupies residues 1-24 (MRFFYKLALMTTVASLACSDTALA). Positions 48–51 (RSLR) match the RxLR motif.

This sequence belongs to the RxLR effector family.

It localises to the secreted. The protein resides in the host cytoplasm. The protein localises to the host nucleus. Secreted effector that does not suppress pattern-triggered immunity (PTI) in plant host. In Plasmopara halstedii (Downy mildew of sunflower), this protein is Secreted RxLR effector protein RXLR-C251.